A 384-amino-acid polypeptide reads, in one-letter code: Alcohol dehydrogenase class-3 (384 aa).

7 residues coordinate Zn(2+): Cys48, His70, Cys100, Cys103, Cys106, Cys114, and Cys177.

The protein belongs to the zinc-containing alcohol dehydrogenase family. Class-III subfamily. In terms of assembly, homodimer. The cofactor is Zn(2+).

It localises to the cytoplasm. It catalyses the reaction a primary alcohol + NAD(+) = an aldehyde + NADH + H(+). The enzyme catalyses a secondary alcohol + NAD(+) = a ketone + NADH + H(+). The catalysed reaction is S-(hydroxymethyl)glutathione + NADP(+) = S-formylglutathione + NADPH + H(+). It carries out the reaction S-(hydroxymethyl)glutathione + NAD(+) = S-formylglutathione + NADH + H(+). In terms of biological role, class-III ADH is remarkably ineffective in oxidizing ethanol, but it readily catalyzes the oxidation of long-chain primary alcohols and the oxidation of S-(hydroxymethyl) glutathione. Plays a role in the calcium flux to the cytoplasm in the ASJ sensory neurons upon removal of a nitric oxide stimulus. The polypeptide is Alcohol dehydrogenase class-3 (Caenorhabditis elegans).